The following is a 344-amino-acid chain: N-acetyl-gamma-glutamyl-phosphate reductase (344 aa).

Cys149 is a catalytic residue.

Belongs to the NAGSA dehydrogenase family. Type 1 subfamily.

It is found in the cytoplasm. The enzyme catalyses N-acetyl-L-glutamate 5-semialdehyde + phosphate + NADP(+) = N-acetyl-L-glutamyl 5-phosphate + NADPH + H(+). The protein operates within amino-acid biosynthesis; L-arginine biosynthesis; N(2)-acetyl-L-ornithine from L-glutamate: step 3/4. Its function is as follows. Catalyzes the NADPH-dependent reduction of N-acetyl-5-glutamyl phosphate to yield N-acetyl-L-glutamate 5-semialdehyde. This is N-acetyl-gamma-glutamyl-phosphate reductase from Thermoanaerobacter sp. (strain X514).